Consider the following 209-residue polypeptide: Ribosomal RNA large subunit methyltransferase E (209 aa).

S-adenosyl-L-methionine contacts are provided by Gly-63, Trp-65, Asp-83, Asp-99, and Asp-124. The Proton acceptor role is filled by Lys-164.

Belongs to the class I-like SAM-binding methyltransferase superfamily. RNA methyltransferase RlmE family.

Its subcellular location is the cytoplasm. It catalyses the reaction uridine(2552) in 23S rRNA + S-adenosyl-L-methionine = 2'-O-methyluridine(2552) in 23S rRNA + S-adenosyl-L-homocysteine + H(+). Functionally, specifically methylates the uridine in position 2552 of 23S rRNA at the 2'-O position of the ribose in the fully assembled 50S ribosomal subunit. The chain is Ribosomal RNA large subunit methyltransferase E from Vibrio cholerae serotype O1 (strain ATCC 39541 / Classical Ogawa 395 / O395).